Reading from the N-terminus, the 303-residue chain is tRNA pseudouridine synthase A (303 aa).

D59 acts as the Nucleophile in catalysis. Substrate is bound at residue Y128.

This sequence belongs to the tRNA pseudouridine synthase TruA family. Homodimer.

The enzyme catalyses uridine(38/39/40) in tRNA = pseudouridine(38/39/40) in tRNA. In terms of biological role, formation of pseudouridine at positions 38, 39 and 40 in the anticodon stem and loop of transfer RNAs. The protein is tRNA pseudouridine synthase A of Bifidobacterium longum (strain DJO10A).